The sequence spans 1349 residues: Membrane-associated phosphatidylinositol transfer protein 2 (1349 aa).

A disordered region spans residues 262-344; it reads EDGEEATELV…RDSDESSDDE (83 aa). Residues 302-322 show a composition bias toward low complexity; the sequence is KQWSTSSKSSRSSKRGASPSR. Residues Ser337, Ser341, Ser368, and Ser589 each carry the phosphoserine modification. Positions 618-631 are enriched in gly residues; it reads GGGGGSSGGGGSSG. The disordered stretch occupies residues 618–671; it reads GGGGGSSGGGGSSGGSSLESSRHLSRSNVDIPRSNGTEDPKRQLPRKRSDSSTY. Ser644 is modified (phosphoserine). Residues 653–667 show a composition bias toward basic and acidic residues; sequence GTEDPKRQLPRKRSD. Ser700, Ser701, and Ser702 each carry phosphoserine. The DDHD domain maps to 715–963; sequence FDFEITDLFL…VSFLLRQVMR (249 aa). Arg828 carries the post-translational modification Omega-N-methylarginine. Residues 876-900 form a disordered region; sequence LPAPSPTTPGPHPPARKASPGLERA. Pro residues predominate over residues 878 to 888; that stretch reads APSPTTPGPHP. Phosphoserine is present on Ser1277. Residues 1296–1326 are disordered; it reads TISAQPSGPSHRHERTQSQADGEQRGQRSMS.

This sequence belongs to the PtdIns transfer protein family. PI transfer class IIA subfamily. In terms of assembly, interacts with PTK2B via its C-terminus. Interacts with CPNE4 (via VWFA domain). As to expression, highly expressed in brain, heart, ovary, testis and thymus. Detected in small intestine, prostate, pancreas, skeletal muscle, liver, colon and placenta.

It localises to the endomembrane system. Catalyzes the transfer of phosphatidylinositol and phosphatidylcholine between membranes (in vitro). Binds calcium ions. The polypeptide is Membrane-associated phosphatidylinositol transfer protein 2 (PITPNM2) (Homo sapiens (Human)).